The sequence spans 204 residues: Probable calcium-binding protein CML46 (204 aa).

EF-hand domains follow at residues 72–106 (LEFQ…LGLS), 132–167 (PSLE…LGLK), and 170–204 (SNLE…NNFC). D145, N147, D149, and D156 together coordinate Ca(2+).

Its function is as follows. Potential calcium sensor. In Arabidopsis thaliana (Mouse-ear cress), this protein is Probable calcium-binding protein CML46.